A 311-amino-acid chain; its full sequence is 4-hydroxy-3-methylbut-2-enyl diphosphate reductase (311 aa).

C14 is a binding site for [4Fe-4S] cluster. Residues H43 and H76 each coordinate (2E)-4-hydroxy-3-methylbut-2-enyl diphosphate. The dimethylallyl diphosphate site is built by H43 and H76. The isopentenyl diphosphate site is built by H43 and H76. Position 98 (C98) interacts with [4Fe-4S] cluster. A (2E)-4-hydroxy-3-methylbut-2-enyl diphosphate-binding site is contributed by H126. A dimethylallyl diphosphate-binding site is contributed by H126. Residue H126 coordinates isopentenyl diphosphate. The active-site Proton donor is E128. T166 is a (2E)-4-hydroxy-3-methylbut-2-enyl diphosphate binding site. C196 contributes to the [4Fe-4S] cluster binding site. Residues S224, S225, N226, and S268 each contribute to the (2E)-4-hydroxy-3-methylbut-2-enyl diphosphate site. Positions 224, 225, 226, and 268 each coordinate dimethylallyl diphosphate. Residues S224, S225, N226, and S268 each contribute to the isopentenyl diphosphate site.

This sequence belongs to the IspH family. It depends on [4Fe-4S] cluster as a cofactor.

It carries out the reaction isopentenyl diphosphate + 2 oxidized [2Fe-2S]-[ferredoxin] + H2O = (2E)-4-hydroxy-3-methylbut-2-enyl diphosphate + 2 reduced [2Fe-2S]-[ferredoxin] + 2 H(+). The enzyme catalyses dimethylallyl diphosphate + 2 oxidized [2Fe-2S]-[ferredoxin] + H2O = (2E)-4-hydroxy-3-methylbut-2-enyl diphosphate + 2 reduced [2Fe-2S]-[ferredoxin] + 2 H(+). It functions in the pathway isoprenoid biosynthesis; dimethylallyl diphosphate biosynthesis; dimethylallyl diphosphate from (2E)-4-hydroxy-3-methylbutenyl diphosphate: step 1/1. The protein operates within isoprenoid biosynthesis; isopentenyl diphosphate biosynthesis via DXP pathway; isopentenyl diphosphate from 1-deoxy-D-xylulose 5-phosphate: step 6/6. Functionally, catalyzes the conversion of 1-hydroxy-2-methyl-2-(E)-butenyl 4-diphosphate (HMBPP) into a mixture of isopentenyl diphosphate (IPP) and dimethylallyl diphosphate (DMAPP). Acts in the terminal step of the DOXP/MEP pathway for isoprenoid precursor biosynthesis. This is 4-hydroxy-3-methylbut-2-enyl diphosphate reductase from Chromobacterium violaceum (strain ATCC 12472 / DSM 30191 / JCM 1249 / CCUG 213 / NBRC 12614 / NCIMB 9131 / NCTC 9757 / MK).